The primary structure comprises 91 residues: Methanol dehydrogenase [cytochrome c] subunit 2 (91 aa).

The N-terminal stretch at 1 to 22 (MKHVLTLLALASVFAVSNQALA) is a signal peptide. Cysteines 28 and 34 form a disulfide.

Belongs to the methanol dehydrogenase subunit 2 family. As to quaternary structure, heterotetramer composed of 2 alpha and 2 beta subunits.

It is found in the cell inner membrane. It carries out the reaction 2 Fe(III)-[cytochrome cL] + a primary alcohol = 2 Fe(II)-[cytochrome cL] + an aldehyde + 2 H(+). In terms of biological role, catalyzes the oxidation of primary alcohols including methanol. This Methylophilus methylotrophus (Bacterium W3A1) protein is Methanol dehydrogenase [cytochrome c] subunit 2 (moxI).